The chain runs to 532 residues: GH3 domain-containing protein (532 aa).

The first 18 residues, 1–18 (MLLLWLLLLLLLLVPLLA), serve as a signal peptide directing secretion. The interval 100 to 123 (LTQTSHTQEQESEETLPSPASPQY) is disordered. Residues Asn-356 and Asn-451 are each glycosylated (N-linked (GlcNAc...) asparagine).

It belongs to the GH3 family. As to expression, highly expressed in mammary tissues from mature virgins and at day 13 of pregnancy, and at lower level during lactation. Expressed at intermediate level in liver. Expressed at lower level in kidney, heart and brain.

Its subcellular location is the endoplasmic reticulum. The protein resides in the nucleus envelope. This is GH3 domain-containing protein (Ghdc) from Mus musculus (Mouse).